The following is a 162-amino-acid chain: MTSKSCLLLVAMVTLTTSVMGTAEVMSHVTAHFGKALEECREESGLSAEVLEEFQHFWREDFEVVHRELGCAIICMSNKFSLLQDDSRMHHVNMHDYVKSFPNGHVLSEKLVELIHNCEKKYDTMTDDCDRVVKVAACFKVDAKAAGIAPEVTMIEAVMEKY.

Residues 1–18 (MTSKSCLLLVAMVTLTTS) form the signal peptide. Intrachain disulfides connect cysteine 40-cysteine 75, cysteine 71-cysteine 129, and cysteine 118-cysteine 138.

It belongs to the PBP/GOBP family. Antenna.

In terms of biological role, present in the aqueous fluid surrounding olfactory sensory dendrites and are thought to aid in the capture and transport of hydrophobic odorants into and through this fluid. The protein is General odorant-binding protein 2 of Heliothis virescens (Tobacco budworm moth).